The primary structure comprises 199 residues: MRQATVTRATKETEITVWLDLDGTGQYEVSTGIGFLDHMLEQVSRHSLMDLRVHAKGDTHIDFHHTTEDTGLAIGQAVTQALGDRKGIQRYGSALIPMDEALTQVAVDLSNRPYLIWKVDFSRDKLGDMDTELFKEWFQAFSQTAGVTLHVANHYGENNHHIVESCYKALARALRQAWEIDPRKADAVPSTKGVLGGTL.

This sequence belongs to the imidazoleglycerol-phosphate dehydratase family.

The protein resides in the cytoplasm. The enzyme catalyses D-erythro-1-(imidazol-4-yl)glycerol 3-phosphate = 3-(imidazol-4-yl)-2-oxopropyl phosphate + H2O. Its pathway is amino-acid biosynthesis; L-histidine biosynthesis; L-histidine from 5-phospho-alpha-D-ribose 1-diphosphate: step 6/9. The protein is Imidazoleglycerol-phosphate dehydratase of Rhodospirillum rubrum (strain ATCC 11170 / ATH 1.1.1 / DSM 467 / LMG 4362 / NCIMB 8255 / S1).